Reading from the N-terminus, the 622-residue chain is Fanconi anemia group G protein (622 aa).

A Phosphoserine modification is found at Ser7. TPR repeat units follow at residues 246–279 (VQVY…GSAW), 344–377 (SQTK…LLDS), 453–486 (SATH…LFRA), and 514–547 (AAAL…CPGN).

In terms of assembly, belongs to the multisubunit FA complex composed of FANCA, FANCB, FANCC, FANCE, FANCF, FANCG, FANCL/PHF9 and FANCM. The complex is not found in FA patients. In complex with FANCF, FANCA and FANCL, but not with FANCC, nor FANCE, interacts with HES1; this interaction may be essential for the stability and nuclear localization of FA core complex proteins. The complex with FANCC and FANCG may also include EIF2AK2 and HSP70. When phosphorylated at Ser-7, forms a complex with BRCA2, FANCD2 and XRCC3. As to expression, highly expressed in testis and thymus. Found in lymphoblasts.

Its subcellular location is the nucleus. It localises to the cytoplasm. Functionally, DNA repair protein that may operate in a postreplication repair or a cell cycle checkpoint function. May be implicated in interstrand DNA cross-link repair and in the maintenance of normal chromosome stability. Candidate tumor suppressor gene. In Homo sapiens (Human), this protein is Fanconi anemia group G protein (FANCG).